The sequence spans 518 residues: Subtilisin-like serine protease Cla h 9.0101 (518 aa).

Positions 1–16 are cleaved as a signal peptide; sequence MRGALAGLSLATLATA. Positions 17–138 are cleaved as a propeptide — removed in mature form; it reads SPVLVNSIHN…ERDQEVHVLG (122 aa). Positions 44-136 constitute an Inhibitor I9 domain; the sequence is YMIKFKDHVT…LVERDQEVHV (93 aa). Residues 148-454 form the Peptidase S8 domain; it reads PWGLARISHR…GGESNYSAIV (307 aa). Active-site charge relay system residues include D184 and H216. The igE-binding stretch occupies residues 244–298; the sequence is RSNGSGSMSDVVKGVEYAAESHLEQVSITKKGKRKGFKGSTANMSLGGGKSPILD. N-linked (GlcNAc...) asparagine glycans are attached at residues N246 and N286. S382 (charge relay system) is an active-site residue. N449 carries an N-linked (GlcNAc...) asparagine glycan. Positions 460-518 are cleaved as a propeptide — removed in mature form; the sequence is KATHRPTMLEEIESEAKVASKKVYSEGDELAHKVAELTEKVEDLIAGELKDMFRELKRE.

Belongs to the peptidase S8 family.

Functionally, serine protease. The protein is Subtilisin-like serine protease Cla h 9.0101 of Davidiella tassiana (Mycosphaerella tassiana).